A 316-amino-acid polypeptide reads, in one-letter code: Small ribosomal subunit protein RACK1 (316 aa).

7 WD repeats span residues 13-44 (GHNGWVTSLATSLENPNMLLSGSRDKSLIIWN), 61-91 (GHSHIVSDCVISSDGAYALSASWDKTLRLWE), 103-133 (GHTNDVLSVSFSADNRQIVSGSRDRTIKLWN), 146-178 (GHTEWVSCVRFSPNPQNPVIVSSGWDKLVKVWE), 190-220 (GHTGYINAVTISPDGSLCASGGKDGTTMLWD), 231-260 (NANDEIHALVFSPNRYWLCAATSSSIIIFD), and 281-311 (SREPECVSLAWSADGQTLFAGYTDNIIRAWG).

It belongs to the WD repeat G protein beta family. Ribosomal protein RACK1 subfamily. Component of the small ribosomal subunit (SSU). Mature N.crassa ribosomes consist of a small (40S) and a large (60S) subunit. The 40S small subunit contains 1 molecule of ribosomal RNA (18S rRNA) and at least 32 different proteins. The large 60S subunit contains 3 rRNA molecules (26S, 5.8S and 5S rRNA) and at least 42 different proteins.

The protein resides in the cytoplasm. In terms of biological role, component of the ribosome, a large ribonucleoprotein complex responsible for the synthesis of proteins in the cell. The small ribosomal subunit (SSU) binds messenger RNAs (mRNAs) and translates the encoded message by selecting cognate aminoacyl-transfer RNA (tRNA) molecules. The large subunit (LSU) contains the ribosomal catalytic site termed the peptidyl transferase center (PTC), which catalyzes the formation of peptide bonds, thereby polymerizing the amino acids delivered by tRNAs into a polypeptide chain. The nascent polypeptides leave the ribosome through a tunnel in the LSU and interact with protein factors that function in enzymatic processing, targeting, and the membrane insertion of nascent chains at the exit of the ribosomal tunnel. Required to activate general amino acid control under conditions of amino acid limitation in the vegetative growth phase, and for formation of protoperithecia in preparation for the sexual phase of the life cycle of N.crassa. This Neurospora crassa (strain ATCC 24698 / 74-OR23-1A / CBS 708.71 / DSM 1257 / FGSC 987) protein is Small ribosomal subunit protein RACK1 (cpc-2).